The chain runs to 440 residues: Streptokinase G (440 aa).

The N-terminal stretch at Met-1–Ala-26 is a signal peptide.

This protein is not a protease, but it activates plasminogen by complexing with it. As a potential virulence factor, it is thought to prevent the formation of effective fibrin barriers around the site of infection, thereby contributing to the invasiveness of the cells. In Streptococcus sp. (strain 19909), this protein is Streptokinase G (skg).